The following is a 212-amino-acid chain: ATP phosphoribosyltransferase 2 (212 aa).

Belongs to the ATP phosphoribosyltransferase family. Short subfamily. As to quaternary structure, heteromultimer composed of HisG and HisZ subunits.

It localises to the cytoplasm. The enzyme catalyses 1-(5-phospho-beta-D-ribosyl)-ATP + diphosphate = 5-phospho-alpha-D-ribose 1-diphosphate + ATP. Its pathway is amino-acid biosynthesis; L-histidine biosynthesis; L-histidine from 5-phospho-alpha-D-ribose 1-diphosphate: step 1/9. Catalyzes the condensation of ATP and 5-phosphoribose 1-diphosphate to form N'-(5'-phosphoribosyl)-ATP (PR-ATP). Has a crucial role in the pathway because the rate of histidine biosynthesis seems to be controlled primarily by regulation of HisG enzymatic activity. The chain is ATP phosphoribosyltransferase 2 (hisG2) from Geobacter sulfurreducens (strain ATCC 51573 / DSM 12127 / PCA).